Here is a 469-residue protein sequence, read N- to C-terminus: Putative dipeptidase MW1694 (469 aa).

Position 84 (His84) interacts with Zn(2+). Asp86 is an active-site residue. A Zn(2+)-binding site is contributed by Asp115. Glu149 serves as the catalytic Proton acceptor. Residues Glu150, Asp173, and His440 each coordinate Zn(2+).

Belongs to the peptidase M20A family. Requires Zn(2+) as cofactor.

The protein is Putative dipeptidase MW1694 of Staphylococcus aureus (strain MW2).